The sequence spans 349 residues: Lipoyl synthase (349 aa).

Cysteine 55, cysteine 60, cysteine 66, cysteine 81, cysteine 85, cysteine 88, and serine 292 together coordinate [4Fe-4S] cluster. The Radical SAM core domain maps to 67 to 281 (WESREATFLI…ADFARELGFG (215 aa)).

It belongs to the radical SAM superfamily. Lipoyl synthase family. The cofactor is [4Fe-4S] cluster.

It localises to the cytoplasm. It carries out the reaction [[Fe-S] cluster scaffold protein carrying a second [4Fe-4S](2+) cluster] + N(6)-octanoyl-L-lysyl-[protein] + 2 oxidized [2Fe-2S]-[ferredoxin] + 2 S-adenosyl-L-methionine + 4 H(+) = [[Fe-S] cluster scaffold protein] + N(6)-[(R)-dihydrolipoyl]-L-lysyl-[protein] + 4 Fe(3+) + 2 hydrogen sulfide + 2 5'-deoxyadenosine + 2 L-methionine + 2 reduced [2Fe-2S]-[ferredoxin]. The protein operates within protein modification; protein lipoylation via endogenous pathway; protein N(6)-(lipoyl)lysine from octanoyl-[acyl-carrier-protein]: step 2/2. Its function is as follows. Catalyzes the radical-mediated insertion of two sulfur atoms into the C-6 and C-8 positions of the octanoyl moiety bound to the lipoyl domains of lipoate-dependent enzymes, thereby converting the octanoylated domains into lipoylated derivatives. The polypeptide is Lipoyl synthase (Corynebacterium diphtheriae (strain ATCC 700971 / NCTC 13129 / Biotype gravis)).